Here is a 513-residue protein sequence, read N- to C-terminus: ATP synthase subunit alpha (513 aa).

G169–T176 contributes to the ATP binding site.

This sequence belongs to the ATPase alpha/beta chains family. F-type ATPases have 2 components, CF(1) - the catalytic core - and CF(0) - the membrane proton channel. CF(1) has five subunits: alpha(3), beta(3), gamma(1), delta(1), epsilon(1). CF(0) has three main subunits: a(1), b(2) and c(9-12). The alpha and beta chains form an alternating ring which encloses part of the gamma chain. CF(1) is attached to CF(0) by a central stalk formed by the gamma and epsilon chains, while a peripheral stalk is formed by the delta and b chains.

It localises to the cell inner membrane. It catalyses the reaction ATP + H2O + 4 H(+)(in) = ADP + phosphate + 5 H(+)(out). Produces ATP from ADP in the presence of a proton gradient across the membrane. The alpha chain is a regulatory subunit. The protein is ATP synthase subunit alpha of Ruthia magnifica subsp. Calyptogena magnifica.